Consider the following 105-residue polypeptide: Large ribosomal subunit protein uL24 (105 aa).

The segment at 1–25 is disordered; the sequence is MHIKKGDNVKVIAGKDKGKEGKVVS.

The protein belongs to the universal ribosomal protein uL24 family. In terms of assembly, part of the 50S ribosomal subunit.

One of two assembly initiator proteins, it binds directly to the 5'-end of the 23S rRNA, where it nucleates assembly of the 50S subunit. Functionally, one of the proteins that surrounds the polypeptide exit tunnel on the outside of the subunit. The sequence is that of Large ribosomal subunit protein uL24 from Staphylococcus saprophyticus subsp. saprophyticus (strain ATCC 15305 / DSM 20229 / NCIMB 8711 / NCTC 7292 / S-41).